The chain runs to 789 residues: Trimethylamine-oxide aldolase (789 aa).

It in the C-terminal section; belongs to the GcvT family.

It carries out the reaction trimethylamine N-oxide + H(+) = dimethylamine + formaldehyde. Its function is as follows. Catalyzes the conversion of trimethylamine N-oxide (TMAO) to dimethylamine (DMA) and formaldehyde. This Ruegeria pomeroyi (strain ATCC 700808 / DSM 15171 / DSS-3) (Silicibacter pomeroyi) protein is Trimethylamine-oxide aldolase.